The following is a 509-amino-acid chain: ATP synthase subunit alpha (509 aa).

Residue 169–176 (GDRQTGKT) coordinates ATP.

The protein belongs to the ATPase alpha/beta chains family. As to quaternary structure, F-type ATPases have 2 components, CF(1) - the catalytic core - and CF(0) - the membrane proton channel. CF(1) has five subunits: alpha(3), beta(3), gamma(1), delta(1), epsilon(1). CF(0) has three main subunits: a(1), b(2) and c(9-12). The alpha and beta chains form an alternating ring which encloses part of the gamma chain. CF(1) is attached to CF(0) by a central stalk formed by the gamma and epsilon chains, while a peripheral stalk is formed by the delta and b chains.

The protein resides in the cell inner membrane. It catalyses the reaction ATP + H2O + 4 H(+)(in) = ADP + phosphate + 5 H(+)(out). Its function is as follows. Produces ATP from ADP in the presence of a proton gradient across the membrane. The alpha chain is a regulatory subunit. The protein is ATP synthase subunit alpha of Rhizobium meliloti (strain 1021) (Ensifer meliloti).